The primary structure comprises 161 residues: Transcription elongation factor GreA (161 aa).

A coiled-coil region spans residues 45–72 (NAEYHSAKEKLKLIDIQIAELNAVISKA).

Belongs to the GreA/GreB family.

Necessary for efficient RNA polymerase transcription elongation past template-encoded arresting sites. The arresting sites in DNA have the property of trapping a certain fraction of elongating RNA polymerases that pass through, resulting in locked ternary complexes. Cleavage of the nascent transcript by cleavage factors such as GreA or GreB allows the resumption of elongation from the new 3'terminus. GreA releases sequences of 2 to 3 nucleotides. This is Transcription elongation factor GreA from Aliarcobacter butzleri (strain RM4018) (Arcobacter butzleri).